The following is a 237-amino-acid chain: Proteasome subunit alpha (237 aa).

It belongs to the peptidase T1A family. The 20S proteasome core is composed of 14 alpha and 14 beta subunits that assemble into four stacked heptameric rings, resulting in a barrel-shaped structure. The two inner rings, each composed of seven catalytic beta subunits, are sandwiched by two outer rings, each composed of seven alpha subunits. The catalytic chamber with the active sites is on the inside of the barrel. Has a gated structure, the ends of the cylinder being occluded by the N-termini of the alpha-subunits. Is capped by the proteasome-associated ATPase, ARC.

The protein localises to the cytoplasm. Its pathway is protein degradation; proteasomal Pup-dependent pathway. Its activity is regulated as follows. The formation of the proteasomal ATPase ARC-20S proteasome complex, likely via the docking of the C-termini of ARC into the intersubunit pockets in the alpha-rings, may trigger opening of the gate for substrate entry. Interconversion between the open-gate and close-gate conformations leads to a dynamic regulation of the 20S proteasome proteolysis activity. Its function is as follows. Component of the proteasome core, a large protease complex with broad specificity involved in protein degradation. The chain is Proteasome subunit alpha from Kineococcus radiotolerans (strain ATCC BAA-149 / DSM 14245 / SRS30216).